Reading from the N-terminus, the 269-residue chain is Shikimate dehydrogenase (NADP(+)) (269 aa).

Residues 17–19 (SKS) and Thr64 each bind shikimate. The active-site Proton acceptor is the Lys68. Residue Asp80 participates in NADP(+) binding. Positions 89 and 105 each coordinate shikimate. NADP(+) contacts are provided by residues 130–134 (GAGGA), 154–159 (NRTHAK), and Met213. Residue Tyr215 participates in shikimate binding. Gly237 is a binding site for NADP(+).

The protein belongs to the shikimate dehydrogenase family. As to quaternary structure, homodimer.

The catalysed reaction is shikimate + NADP(+) = 3-dehydroshikimate + NADPH + H(+). The protein operates within metabolic intermediate biosynthesis; chorismate biosynthesis; chorismate from D-erythrose 4-phosphate and phosphoenolpyruvate: step 4/7. In terms of biological role, involved in the biosynthesis of the chorismate, which leads to the biosynthesis of aromatic amino acids. Catalyzes the reversible NADPH linked reduction of 3-dehydroshikimate (DHSA) to yield shikimate (SA). The sequence is that of Shikimate dehydrogenase (NADP(+)) from Neisseria polysaccharea.